The sequence spans 622 residues: Threonine--tRNA ligase (622 aa).

The editing domain stretch occupies residues 1–134 (MKTLLIHSDY…GHPLSELSRK (134 aa)). The catalytic stretch occupies residues 199 to 498 (PHVKYIKEKE…TLEDKPPALP (300 aa)). The Zn(2+) site is built by cysteine 291, histidine 343, and histidine 467.

Belongs to the class-II aminoacyl-tRNA synthetase family. Homodimer. Zn(2+) serves as cofactor.

It localises to the cytoplasm. The enzyme catalyses tRNA(Thr) + L-threonine + ATP = L-threonyl-tRNA(Thr) + AMP + diphosphate + H(+). Functionally, catalyzes the attachment of threonine to tRNA(Thr) in a two-step reaction: L-threonine is first activated by ATP to form Thr-AMP and then transferred to the acceptor end of tRNA(Thr). Also edits incorrectly charged L-seryl-tRNA(Thr). The chain is Threonine--tRNA ligase from Methanococcus vannielii (strain ATCC 35089 / DSM 1224 / JCM 13029 / OCM 148 / SB).